We begin with the raw amino-acid sequence, 45 residues long: Bacteriocin fulvocin-C (45 aa).

Functionally, bacteriocin. The protein is Bacteriocin fulvocin-C of Myxococcus fulvus.